The chain runs to 515 residues: 1-pyrroline-5-carboxylate dehydrogenase (515 aa).

Catalysis depends on residues glutamate 286 and cysteine 320.

It belongs to the aldehyde dehydrogenase family. RocA subfamily.

It carries out the reaction L-glutamate 5-semialdehyde + NAD(+) + H2O = L-glutamate + NADH + 2 H(+). The protein operates within amino-acid degradation; L-proline degradation into L-glutamate; L-glutamate from L-proline: step 2/2. The sequence is that of 1-pyrroline-5-carboxylate dehydrogenase from Geobacillus kaustophilus (strain HTA426).